We begin with the raw amino-acid sequence, 1156 residues long: Nuclear pore complex protein Nup133 (1156 aa).

The residue at position 1 (M1) is an N-acetylmethionine. The tract at residues 1 to 39 is disordered; the sequence is MFPAAPSPRTPGTGSRRGPLAGLGPGSTPRTASRKGLPL. Phosphoserine is present on residues S7 and S15. An Omega-N-methylarginine modification is found at R17. S27 is subject to Phosphoserine. A Phosphothreonine modification is found at T28. The residue at position 30 (R30) is an Omega-N-methylarginine. S41, S45, S50, S72, S131, S480, S489, S493, S501, and S755 each carry phosphoserine. At K787 the chain carries N6-acetyllysine. S1133 is modified (phosphoserine).

Belongs to the nucleoporin Nup133 family. In terms of assembly, forms part of the Nup160 subcomplex in the nuclear pore which is composed of NUP160, NUP133, NUP107 and Nup96. This complex plays a role in RNA export and in tethering Nup98 and NUP153 to the nucleus. As to expression, widely expressed in fetal and adult tissues. Expressed in the brain and kidney.

It is found in the nucleus. The protein localises to the nuclear pore complex. Its subcellular location is the chromosome. The protein resides in the centromere. It localises to the kinetochore. Its function is as follows. Involved in poly(A)+ RNA transport. Involved in nephrogenesis. This is Nuclear pore complex protein Nup133 (NUP133) from Homo sapiens (Human).